The following is a 268-amino-acid chain: Serine/arginine-rich splicing factor SR30 (268 aa).

RRM domains lie at 7–82 (RTIY…IAHG) and 109–187 (YRVL…EYES). Residues 186–199 (ESRSVSRSPDDSKS) are compositionally biased toward basic and acidic residues. Residues 186–268 (ESRSVSRSPD…NSPVSPVISG (83 aa)) form a disordered region. A phosphoserine mark is found at Ser-193, Ser-210, Ser-212, Ser-214, Ser-219, Ser-221, Ser-227, Ser-236, Ser-246, Ser-256, and Ser-260. Residues 207–247 (RGPSCSYSSKSRSVSPARSISPRSRPLSRSRSLYSSVSRSQ) show a composition bias toward low complexity. Positions 257-268 (RSNSPVSPVISG) are enriched in low complexity.

The protein belongs to the splicing factor SR family. SR subfamily. Component of the spliceosome. Interacts with SNRNP35, CYP59 and CYP63. In terms of processing, phosphorylated. Ubiquitous.

The protein resides in the nucleus speckle. The protein localises to the nucleus. It is found in the nucleoplasm. It localises to the cytoplasm. Its function is as follows. Regulatory splicing factor that modulates alternative splicing and gene expression in specific cell types. Autoregulates its own expression. Probably involved in intron recognition and spliceosome assembly. In Arabidopsis thaliana (Mouse-ear cress), this protein is Serine/arginine-rich splicing factor SR30 (SR30).